Consider the following 746-residue polypeptide: Protein psiN (746 aa).

Residues 1–23 (MGNINKKLFYFLIQLITILIVLS) form the signal peptide. At 24–679 (DDSYNSLLPL…KCQSAAVKAA (656 aa)) the chain is on the extracellular side. Residues Asn97 and Asn124 are each glycosylated (N-linked (GlcNAc...) asparagine). The 152-residue stretch at 125-276 (VTSDDPRIYS…YDYCGVCEGM (152 aa)) folds into the PA14 domain. N-linked (GlcNAc...) asparagine glycans are attached at residues Asn319, Asn353, Asn380, Asn477, Asn553, Asn628, and Asn654. The helical transmembrane segment at 680–700 (VGVGAGAAAGIAIGGAIALGL) threads the bilayer. Topologically, residues 701 to 746 (AAFGGKRGYDAWKSSRDNQIQTSSENPLYNPNPNQGDNPLYAANNS) are cytoplasmic. Positions 714–746 (SSRDNQIQTSSENPLYNPNPNQGDNPLYAANNS) are disordered. Polar residues predominate over residues 717-746 (DNQIQTSSENPLYNPNPNQGDNPLYAANNS).

It belongs to the prespore-cell-inducing factor family.

It is found in the membrane. The polypeptide is Protein psiN (psiN) (Dictyostelium discoideum (Social amoeba)).